The sequence spans 349 residues: tRNA uridine(34) hydroxylase (349 aa).

A Rhodanese domain is found at 146-240 (DDPDAVFIDM…YARKAREQGL (95 aa)). Cys-200 serves as the catalytic Cysteine persulfide intermediate. The segment covering 314 to 328 (PEEEQRRRRAGRENG) has biased composition (basic and acidic residues). The interval 314–349 (PEEEQRRRRAGRENGNKIFNKSRGRLNTTLGIPDPE) is disordered.

This sequence belongs to the TrhO family.

It carries out the reaction uridine(34) in tRNA + AH2 + O2 = 5-hydroxyuridine(34) in tRNA + A + H2O. Its function is as follows. Catalyzes oxygen-dependent 5-hydroxyuridine (ho5U) modification at position 34 in tRNAs. In Cronobacter sakazakii (strain ATCC BAA-894) (Enterobacter sakazakii), this protein is tRNA uridine(34) hydroxylase.